A 412-amino-acid polypeptide reads, in one-letter code: UV DNA damage endonuclease (412 aa).

This sequence belongs to the uve1/UvsE family.

Its function is as follows. Component in a DNA repair pathway. Removal of UV LIGHT damaged nucleotides. Recognizes pyrimidine dimers and cleave a phosphodiester bond immediately 5' to the lesion. The sequence is that of UV DNA damage endonuclease from Clostridium perfringens (strain 13 / Type A).